A 389-amino-acid chain; its full sequence is Gustatory receptor for bitter taste 22e (389 aa).

Topologically, residues 1–14 are cytoplasmic; sequence MFRPSGSGYRQKWT. Residues 15–35 traverse the membrane as a helical segment; that stretch reads GLTLKGALYGSWILGVFPFAY. At 36–46 the chain is on the extracellular side; that stretch reads DSWTRTLRRSK. A helical membrane pass occupies residues 47-67; the sequence is WLIAYGFVLNAAFILLVVTND. Residues 68–142 are Cytoplasmic-facing; sequence TESETPLRME…SLEECISFDR (75 aa). The chain crosses the membrane as a helical span at residues 143–163; that stretch reads FVLYKGFSVVLELVSMLVLEL. Over 164–170 the chain is Extracellular; sequence GMSPNYS. N-linked (GlcNAc...) asparagine glycosylation occurs at asparagine 168. The helical transmembrane segment at 171 to 191 threads the bilayer; the sequence is AQFFIGLGSLCLMLLAVLLGA. The Cytoplasmic segment spans residues 192-254; that stretch reads SHFHLAVVFV…QRLASIYDYQ (63 aa). The helical transmembrane segment at 255–275 threads the bilayer; sequence MVMVMVSFLIANVLGIYFFII. Residues 276-287 lie on the Extracellular side of the membrane; sequence YSISLNKSLDFK. An N-linked (GlcNAc...) asparagine glycan is attached at asparagine 281. The helical transmembrane segment at 288–308 threads the bilayer; sequence ILVFVQALVINMLDFWLNVEI. Topologically, residues 309–366 are cytoplasmic; that stretch reads CELAERTGRQTSTILKLFNDIENIDEKLERSITDFALFCSHRRLRFHHCGLFYVNYEM. A helical transmembrane segment spans residues 367 to 387; the sequence is GFRMAITSFLYLLFLIQFDYW. Topologically, residues 388-389 are extracellular; sequence NL.

Belongs to the insect chemoreceptor superfamily. Gustatory receptor (GR) family. Gr22e subfamily. In terms of tissue distribution, taste bristles on the labial palp, labral and cibarial sense organs, chemosensory bristles on the leg and anterior wing margin. In larvae, is expressed in neurons of the terminal external chemosensory organ and in the dorsal pharyngeal sense organ. Neurons expressing Gr22e also express Gr66a and correspond to taste neurons that mediate sensitivity to bitter compounds.

The protein resides in the cell membrane. Its function is as follows. Gustatory receptor which mediates acceptance or avoidance behavior, depending on its substrates. Seems to be involved in the sensing of bitter taste since it is expressed in neurons that mediate sensitivity to bitter compounds which are also avoidance-type taste neurons. This Drosophila melanogaster (Fruit fly) protein is Gustatory receptor for bitter taste 22e (Gr22e).